The sequence spans 621 residues: MSFETAKYPTLALASTVQELRLLPKESLPTLCDELRQYLLDSVSRSSGHFASGLGVVELTVALHYVYNTPFDHLIWDVGHQAYPHKILTGRRDRIGTIRQKNGLHPFPWRDESEYDVLNVGHSSTSISAGLGMAVAAGKEAQGRRTACVIGDGAITAGMAFEAMNHAGDCKADLLVVLNDNEMSISENVGALNNRLAQILSGKTYSRLRESGKKVLDGLPPIKELVKRTEEHLKGMVVPGTLFEELGFNYIGPVDGHDVLALVHTLRNMRALKGPQFLHVMTKKGKGYAPAEKDPISWHAVPKFDPASGLLPKSAEGLPSYSKIFGQWLSETAAADDRLMAVTPAMREGSGMVSFSRDYPQQYFDVAIAEQHAVTFAAGLAIGGYKPVVAIYSTFLQRAYDQLIHDVAIQKLPVLFAIDRGGIVGADGQTHQGAFDIAFLRCIPDMVIMTPSDENECRQMLYTGYHHQGGPSAVRYPRGNGTGAPLEALASLPLGKGVVKRRGEKMAILNFGTLLPQAAEVAEAINATLVDMRFVKPLDEALVLELAAQHQSLITLEEGSIKGGAGSGVNELLMAKRRAIPVLNIGLPDEFIPPGTQDEIRSDYQLDADGIQRQIADWLAQ.

Residues H80 and 121 to 123 each bind thiamine diphosphate; that span reads GHS. Mg(2+) is bound at residue D152. Thiamine diphosphate is bound by residues 153–154, N181, Y288, and E370; that span reads GA. N181 serves as a coordination point for Mg(2+).

This sequence belongs to the transketolase family. DXPS subfamily. As to quaternary structure, homodimer. Mg(2+) is required as a cofactor. It depends on thiamine diphosphate as a cofactor.

It carries out the reaction D-glyceraldehyde 3-phosphate + pyruvate + H(+) = 1-deoxy-D-xylulose 5-phosphate + CO2. It participates in metabolic intermediate biosynthesis; 1-deoxy-D-xylulose 5-phosphate biosynthesis; 1-deoxy-D-xylulose 5-phosphate from D-glyceraldehyde 3-phosphate and pyruvate: step 1/1. Catalyzes the acyloin condensation reaction between C atoms 2 and 3 of pyruvate and glyceraldehyde 3-phosphate to yield 1-deoxy-D-xylulose-5-phosphate (DXP). This chain is 1-deoxy-D-xylulose-5-phosphate synthase, found in Erwinia tasmaniensis (strain DSM 17950 / CFBP 7177 / CIP 109463 / NCPPB 4357 / Et1/99).